The chain runs to 481 residues: MQLQSYDPGNFYDELFFAPGQPRPQAAPLIDWMGQLSPEILRQHHETAQIALFNLGVTFRVYNDDQGVERIFPVDIIPRIIAEAEWRSLEKGLKQRIKALNCFLTDIYGPQNIVKDGIVPLDIVESASGFLKPCIGIKPPAGVWCHITGTDLVRDGAGKWFVLEDNLRVPSGISYVLENRRVMKSTFPDMFQTIPIQPVDSYPSQLLETLLNLAPPHLAAPVVVVLTPGINNSAYFEHSFLAQQMGVELVEGRDLVVADGYLQMRTTKGLQRVDVVYRRLDDDFIDPEVFRPDSLLGVPGLMEVYRQGRVALANAPGTGVADDKVIYAYVPEMINYYLKEEPLLANVPTYLCWREEDRNYVLDHLAELVVKSANEAGGYGMLMGPSASPQERAQFAERIRHNPRNYIAQPVLNLSRVPTLIGDQVEGRHVDLRPYILNRGDEIYVHPGGLTRVALRKGSLVVNSSQGGGSKDTWVLQGSTQ.

To M.tuberculosis RV2411c.

This is an uncharacterized protein from Synechocystis sp. (strain ATCC 27184 / PCC 6803 / Kazusa).